Reading from the N-terminus, the 1233-residue chain is MEESPPKQKSNTKVAQHEGQQDLNTTRHMNVELKHRPKLERHLKLGMIPVVYMKQGEEILYPAQSLREENLIQNFTSLLLLQKLCPKDPENMIRKSWASCVPEEGGHMINIQDLFGPNIGTQKEPQLVIIEGAAGIGKSTLARLVKRAWKEGQLYRDHFQHVFFFSCRELAQCKKLSLAELIAQGQEVPTAPINQILSHPEKLLFILDGIDEPAWVLADQNPELCLHWSQRQPVHTLLGSLLGKSILPEAFFLLTTRTTALQKFIPSLPMPCQVEVLGFSGIERENYFYKYFANQRHAITAFMMVESNPVLLTLCEVPWVCWLVCTCLKKQMEQGRVLSLKSQTTTALCLKYLSLTIPDKHRRTQVKALCSLAAEGIWKRRTLFSESDLCKQGLDEDAVATFLKTGVLQKQASSLSYSFAHLCLQEFFAAISCILEDSEERHGNMEMDRIVETLVERYGRQNLFEAPTVRFLFGLLGKEGVKGMEKLFSCSLHGKTNLKLLWHILVKSQPHQPPCLGLLHCLYENQDMELLTHVMHDLQGTIVPGPNDTAHTVLQTNVKHLVVQTDMELMVATFCIQFYCHVRTLQLNMEKQQGYALISPRMVLYRWTPITNASWEILFYNLKFTRNLEGLDLSGNSLRYSVVQSLCNTLRYPGCQLKTLWLVKCGLTSRYCSLLASVLSAHSSLTELYLQLNDLGDDGVRMLCEGLRNPVCNLSILWLDLSSLSAQVITELRTLEEKNPKLYIRSIWMPHMMVPTENMDEEAILTTLKQQRQESGDKPMEILGTEEDFWGPTGPVATELVDRVRNLYRMPQMMVPTENMDEEDILTSFKQQRQQSGANPMEILGTEEDFWGPIGPVATEVVYRERNLYRVQLPMAGSYHCPSTRLHFVVTRAVTIEIEFCAWSQFLDKTPLQQSHMVVGPLFDIKAEQGAVTAVYLPHFVSLKDTKASTFDFKVAHFQEHGMVLETPDRVKPGYTVLKNPSFSPMGVVLRIIPAARHFIPITSITLIYYRVNQEEVTLHLYLVPNDCTIQKAIDDEEMKFQFVRINKPPPVDNLFIGSRYIVSGSENLEITPKELELCYRSSKEFQLFSEIYVGNMGSEIKLQIKNKKHMKLIWEALLKPGDLRPALPRIAQALKDAPSLLHFMDQHREQLVARVTSVDPLLDKLHGLVLNEESYEAVRAENTNQDKMRKLFNLSRSWSRACKDLFYQALKETHPHLVMDLLEKSGGVSLGS.

A disordered region spans residues 1–22; that stretch reads MEESPPKQKSNTKVAQHEGQQD. One can recognise an NACHT domain in the interval 126–435; that stretch reads QLVIIEGAAG…EFFAAISCIL (310 aa). 132–139 provides a ligand contact to ATP; it reads GAAGIGKS. LRR repeat units follow at residues 627 to 647 and 684 to 704; these read NLEGLDLSGNSLRYSVVQSLC and SLTELYLQLNDLGDDGVRMLC. Positions 850–983 are ZU5; sequence FWGPIGPVAT…GYTVLKNPSF (134 aa). Positions 850–1133 constitute an FIIND domain; sequence FWGPIGPVAT…LRPALPRIAQ (284 aa). The segment at 984–1133 is UPA; that stretch reads SPMGVVLRII…LRPALPRIAQ (150 aa). The CARD domain occupies 1143–1226; that stretch reads HFMDQHREQL…HLVMDLLEKS (84 aa).

This sequence belongs to the NLRP family. Interacts with DPP9; leading to inhibit activation of the inflammasome. DPP9 acts via formation of a ternary complex, composed of a DPP9 homodimer, one full-length Nlrp1b protein, and one cleaved C-terminus of Nlrp1b (NACHT, LRR and PYD domains-containing protein 1b, C-terminus). Interacts with DPP8; leading to inhibit activation of the inflammasome, probably via formation of a ternary complex with DPP8. Interacts (via LRR repeats) with BCL2 and BCL2L1 (via the loop between motifs BH4 and BH3). Interacts with NOD2; this interaction may increase IL1B release. Interacts with EIF2AK2/PKR; this interaction requires EIF2AK2 activity, is accompanied by EIF2AK2 autophosphorylation and promotes inflammasome assembly in response to B.anthracis lethal toxin. Interacts with MEFV; this interaction targets Nlrp1b to degradation by autophagy, hence preventing excessive IL1B- and IL18-mediated inflammation. As to quaternary structure, interacts with the C-terminal part of Nlrp1b (NACHT, LRR and PYD domains-containing protein 1b, C-terminus) in absence of pathogens and other damage-associated signals. In terms of assembly, interacts with the N-terminal part of Nlrp1b (NACHT, LRR and PYD domains-containing protein 1b, N-terminus) in absence of pathogens and other damage-associated signals. Homomultimer; forms the Nlrp1b inflammasome polymeric complex, a filament composed of homopolymers of this form in response to pathogens and other damage-associated signals. The Nlrp1b inflammasome polymeric complex directly recruits pro-caspase-1 (proCASP1) independently of PYCARD/ASC. Interacts (via CARD domain) with CASP1 (via CARD domain); leading to CASP1 activation. In terms of processing, autocatalytically cleaved. Autocatalytic cleavage in FIIND region occurs constitutively, prior to activation signals, and is required for inflammasome activity (IL1B release), possibly by facilitating CASP1 binding. Both N- and C-terminal parts remain associated non-covalently. Ubiquitinated by UBR2, a component of the N-end rule pathway in response to pathogens and other damage-associated signals, leading to its degradation by the proteasome and subsequent release of the cleaved C-terminal part of the protein (NACHT, LRR and PYD domains-containing protein 1b, C-terminus), which polymerizes and forms the Nlrp1b inflammasome. Post-translationally, (Microbial infection) Cleavage by B.anthracis lethal toxin (LT) endopeptidase promotes ubiquitination and degradation of the N-terminal part, releasing the cleaved C-terminal part of the protein (NACHT, LRR and PYD domains-containing protein 1b, C-terminus), which polymerizes and forms the Nlrp1b inflammasome. In terms of processing, (Microbial infection) Ubiquitinated by S.flexneri IpaH7.8, leading to its degradation by the proteasome and subsequent release of the cleaved C-terminal part of the protein (NACHT, LRR and PYD domains-containing protein 1b, C-terminus), which polymerizes and forms the Nlrp1b inflammasome. As to expression, widely expressed, including in macrophages.

Its subcellular location is the cytoplasm. The protein localises to the cytosol. It is found in the membrane. The protein resides in the inflammasome. Activated by cleavage by B.anthracis lethal toxin (LT) endopeptidase: cleavage by LT promotes ubiquitination and degradation of the N-terminal part, releasing the cleaved C-terminal part of the protein (NACHT, LRR and PYD domains-containing protein 1b, C-terminus), which polymerizes and forms the Nlrp1b inflammasome. Activated by S.flexneri IpaH7.8, an E3 ubiquitin ligase that mediates ubiquitination and degradation of the N-terminal part, releasing the cleaved C-terminal part of the protein, which polymerizes and forms the Nlrp1b inflammasome. Nlrp1b inflammasome is inhibited by DPP8 and DPP9, which sequester the C-terminal fragment of Nlrp1b (NACHT, LRR and PYD domains-containing protein 1b, C-terminus) in a ternary complex, thereby preventing Nlrp1b oligomerization and activation. Nlrp1b inflammasome is activated by Val-boroPro (Talabostat, PT-100), an inhibitor of dipeptidyl peptidases DPP8 and DPP9. Val-boroPro relieves inhibition of DPP8 and/or DPP9 by promoting disruption of the ternary complex, releasing its C-terminal part from autoinhibition. Activated by metabolic inhibitors, such as 2-deoxy-D-glucose and sodium azide, by nutrient deprivation and hypoxia, possibly due to a decrease in cytosolic ATP. Also activated by Toxoplasma gondii. Not activated by muramyl dipeptide, nor by full-length bacterial peptidoglycan. Contrary to its human ortholog, not activated by positive-strand RNA virus such as Semliki Forrest virus or long dsRNA. Acts as the sensor component of the Nlrp1b inflammasome, which mediates inflammasome activation in response to various pathogen-associated signals, leading to subsequent pyroptosis. Inflammasomes are supramolecular complexes that assemble in the cytosol in response to pathogens and other damage-associated signals and play critical roles in innate immunity and inflammation. Acts as a recognition receptor (PRR): recognizes specific pathogens and other damage-associated signals, such as B.anthracis lethal toxin (LT) or Val-boroPro inhibitor, and mediates the formation of the inflammasome polymeric complex. In response to pathogen-associated signals, the N-terminal part of Nlrp1b is degraded by the proteasome, releasing the cleaved C-terminal part of the protein (NACHT, LRR and PYD domains-containing protein 1b, C-terminus), which polymerizes to initiate the formation of the inflammasome complex: the inflammasome directly recruits pro-caspase-1 (proCASP1) independently of PYCARD/ASC and promotes caspase-1 (CASP1) activation, which subsequently cleaves and activates inflammatory cytokines IL1B and IL18 and gasdermin-D (GSDMD), leading to pyroptosis. In the absence of GSDMD expression, the Nlrp1b inflammasome is able to recruit and activate CASP8, leading to activation of gasdermin-E (GSDME). Activation of Nlrp1b inflammasome is also required for HMGB1 secretion; the active cytokines and HMGB1 stimulate inflammatory responses. Primary mediator of macrophage susceptibility to B.anthracis LT: in response to B.anthracis infection, macrophages and dendritic cells release IL1B and undergo pyroptosis. This early inflammatory response to the toxin increases resistance to infection by B.anthracis spores. Functionally, constitutes the precursor of the Nlrp1b inflammasome, which mediates autoproteolytic processing within the FIIND domain to generate the N-terminal and C-terminal parts, which are associated non-covalently in absence of pathogens and other damage-associated signals. Its function is as follows. Regulatory part that prevents formation of the Nlrp1b inflammasome: in absence of pathogens and other damage-associated signals, interacts with the C-terminal part of Nlrp1b (NACHT, LRR and PYD domains-containing protein 1b, C-terminus), preventing activation of the Nlrp1b inflammasome. In response to pathogen-associated signals, this part is ubiquitinated by the N-end rule pathway and degraded by the proteasome, releasing the cleaved C-terminal part of the protein, which polymerizes and forms the Nlrp1b inflammasome. In terms of biological role, constitutes the active part of the Nlrp1b inflammasome. In absence of pathogens and other damage-associated signals, interacts with the N-terminal part of Nlrp1b (NACHT, LRR and PYD domains-containing protein 1b, N-terminus), preventing activation of the Nlrp1b inflammasome. In response to pathogen-associated signals, the N-terminal part of Nlrp1b is degraded by the proteasome, releasing this form, which polymerizes to form the Nlrp1b inflammasome complex: the Nlrp1b inflammasome complex then directly recruits pro-caspase-1 (proCASP1) and promotes caspase-1 (CASP1) activation, leading to gasdermin-D (GSDMD) cleavage and subsequent pyroptosis. This is NACHT, LRR and PYD domains-containing protein 1b allele 1 from Mus musculus (Mouse).